A 119-amino-acid polypeptide reads, in one-letter code: Toxin ICK-11 (119 aa).

The signal sequence occupies residues 1–19 (MMKLYSLVIIATLAAAAFA). Cystine bridges form between Cys59/Cys74, Cys67/Cys80, Cys71/Cys116, and Cys73/Cys87.

This sequence belongs to the neurotoxin 25 family. ICK-8 subfamily. In terms of tissue distribution, expressed by the venom gland.

The protein localises to the secreted. In terms of biological role, ion channel inhibitor. This chain is Toxin ICK-11, found in Trittame loki (Brush-footed trapdoor spider).